The chain runs to 249 residues: Diphthine synthase (249 aa).

S-adenosyl-L-methionine is bound by residues aspartate 83, leucine 86, 111 to 112, leucine 163, and leucine 205; that span reads SI.

It belongs to the diphthine synthase family. As to quaternary structure, homodimer.

It catalyses the reaction 2-[(3S)-amino-3-carboxypropyl]-L-histidyl-[translation elongation factor 2] + 3 S-adenosyl-L-methionine = diphthine-[translation elongation factor 2] + 3 S-adenosyl-L-homocysteine + 3 H(+). Its pathway is protein modification; peptidyl-diphthamide biosynthesis. Its function is as follows. S-adenosyl-L-methionine-dependent methyltransferase that catalyzes the trimethylation of the amino group of the modified target histidine residue in translation elongation factor 2 (EF-2), to form an intermediate called diphthine. The three successive methylation reactions represent the second step of diphthamide biosynthesis. The polypeptide is Diphthine synthase (Pyrobaculum islandicum (strain DSM 4184 / JCM 9189 / GEO3)).